The chain runs to 499 residues: Glucose-6-phosphate exchanger SLC37A2 (499 aa).

Residues 21–40 (YRGFIIVMTFLFYTCYHLSR) form a helical membrane-spanning segment. N-linked (GlcNAc...) asparagine glycosylation is found at N53, N62, and N66. Helical transmembrane passes span 86-106 (GSLD…SGIF), 116-136 (LSGG…GYYW), 143-163 (YYIL…PAVV), 187-207 (AVGN…AWGL), 208-228 (SFIV…FFLV), 302-322 (LCLL…PLYI), 334-354 (GDLS…AGGI), 362-382 (AITC…YNYF), 391-411 (IAML…ITTA), 434-454 (AIID…AGVL), and 458-478 (GWNY…LLLA).

It belongs to the major facilitator superfamily. Organophosphate:Pi antiporter (OPA) (TC 2.A.1.4) family.

Its subcellular location is the endoplasmic reticulum membrane. It carries out the reaction D-glucose 6-phosphate(in) + phosphate(out) = D-glucose 6-phosphate(out) + phosphate(in). Inorganic phosphate and glucose-6-phosphate antiporter. May transport cytoplasmic glucose-6-phosphate into the lumen of the endoplasmic reticulum and translocate inorganic phosphate into the opposite direction. The sequence is that of Glucose-6-phosphate exchanger SLC37A2 from Xenopus laevis (African clawed frog).